The sequence spans 134 residues: MGAIGFTGPFWIYFKRAADKKTFRSVAVFLVRAVILLIFAAFGNIGSIKKSKILLLKFSIINIIMLLFGIAQIIVTNVVDCENDPDNSFSFLCSNSEGAYYAPMILLLAVNLCGAVFGLILRYVIVHDTKGNYY.

The next 3 helical transmembrane spans lie at 26 to 46 (VAVFLVRAVILLIFAAFGNIG), 55 to 75 (LLKFSIINIIMLLFGIAQIIV), and 101 to 121 (YAPMILLLAVNLCGAVFGLIL).

It is found in the membrane. This is an uncharacterized protein from Dictyostelium discoideum (Social amoeba).